A 245-amino-acid polypeptide reads, in one-letter code: 1-(5-phosphoribosyl)-5-[(5-phosphoribosylamino)methylideneamino] imidazole-4-carboxamide isomerase (245 aa).

The active-site Proton acceptor is the aspartate 7. Aspartate 129 acts as the Proton donor in catalysis.

The protein belongs to the HisA/HisF family.

The protein resides in the cytoplasm. The catalysed reaction is 1-(5-phospho-beta-D-ribosyl)-5-[(5-phospho-beta-D-ribosylamino)methylideneamino]imidazole-4-carboxamide = 5-[(5-phospho-1-deoxy-D-ribulos-1-ylimino)methylamino]-1-(5-phospho-beta-D-ribosyl)imidazole-4-carboxamide. Its pathway is amino-acid biosynthesis; L-histidine biosynthesis; L-histidine from 5-phospho-alpha-D-ribose 1-diphosphate: step 4/9. In Escherichia coli O81 (strain ED1a), this protein is 1-(5-phosphoribosyl)-5-[(5-phosphoribosylamino)methylideneamino] imidazole-4-carboxamide isomerase.